Here is a 342-residue protein sequence, read N- to C-terminus: MTLKPVREVSPGSQEGEERLEQSLRPATFEEYVGQEKLVENFRVYAKAARARGEALDHVLLSGPPGLGKTSLAHILARELGVALHVTSGPALVKKGDLAGLLTALAPRDILFIDEIHRLSPAVEEALYPAMEDYRFDVVLGAGLGAQTMEMKLERFTLVGATTRTGLLASPLRDRFPIQERLGYYEPTELREIAVRAARKLALPVDPAGAEELARRARGTPRIAIRLLQRARDFAQVEGDGTLTREIVETTLERLEVDGRGLDAMDRRILAVVLDTFGGGPVGIDAVAAAVGEERDTLEDVYEPFLVREGFLARTPRGRVALPPAYAHLGRERPQGKQGSLI.

Positions 1–22 (MTLKPVREVSPGSQEGEERLEQ) are disordered. Residues 1-185 (MTLKPVREVS…FPIQERLGYY (185 aa)) are large ATPase domain (RuvB-L). Residues Leu-24, Arg-25, Gly-66, Lys-69, Thr-70, Ser-71, 132 to 134 (EDY), Arg-175, Tyr-185, and Arg-222 each bind ATP. Thr-70 contacts Mg(2+). The tract at residues 186-256 (EPTELREIAV…IVETTLERLE (71 aa)) is small ATPAse domain (RuvB-S). The segment at 259–342 (GRGLDAMDRR…RPQGKQGSLI (84 aa)) is head domain (RuvB-H). Residues Arg-295, Arg-314, and Arg-319 each coordinate DNA.

This sequence belongs to the RuvB family. In terms of assembly, homohexamer. Forms an RuvA(8)-RuvB(12)-Holliday junction (HJ) complex. HJ DNA is sandwiched between 2 RuvA tetramers; dsDNA enters through RuvA and exits via RuvB. An RuvB hexamer assembles on each DNA strand where it exits the tetramer. Each RuvB hexamer is contacted by two RuvA subunits (via domain III) on 2 adjacent RuvB subunits; this complex drives branch migration. In the full resolvosome a probable DNA-RuvA(4)-RuvB(12)-RuvC(2) complex forms which resolves the HJ.

It is found in the cytoplasm. It catalyses the reaction ATP + H2O = ADP + phosphate + H(+). In terms of biological role, the RuvA-RuvB-RuvC complex processes Holliday junction (HJ) DNA during genetic recombination and DNA repair, while the RuvA-RuvB complex plays an important role in the rescue of blocked DNA replication forks via replication fork reversal (RFR). RuvA specifically binds to HJ cruciform DNA, conferring on it an open structure. The RuvB hexamer acts as an ATP-dependent pump, pulling dsDNA into and through the RuvAB complex. RuvB forms 2 homohexamers on either side of HJ DNA bound by 1 or 2 RuvA tetramers; 4 subunits per hexamer contact DNA at a time. Coordinated motions by a converter formed by DNA-disengaged RuvB subunits stimulates ATP hydrolysis and nucleotide exchange. Immobilization of the converter enables RuvB to convert the ATP-contained energy into a lever motion, pulling 2 nucleotides of DNA out of the RuvA tetramer per ATP hydrolyzed, thus driving DNA branch migration. The RuvB motors rotate together with the DNA substrate, which together with the progressing nucleotide cycle form the mechanistic basis for DNA recombination by continuous HJ branch migration. Branch migration allows RuvC to scan DNA until it finds its consensus sequence, where it cleaves and resolves cruciform DNA. This is Holliday junction branch migration complex subunit RuvB from Anaeromyxobacter sp. (strain Fw109-5).